The primary structure comprises 726 residues: PTS system glucose-specific EIICBA component (726 aa).

Positions 1 to 453 (MMKDTFKNVL…FNYATPGRNG (453 aa)) constitute a PTS EIIC type-1 domain. 9 consecutive transmembrane segments (helical) span residues 18–38 (FGKA…MISI), 62–82 (IGWG…GGSW), 90–110 (AFAA…IFGV), 139–159 (VLEA…GFVG), 184–204 (FVPF…AAFW), 311–331 (FKVG…VAIY), 344–364 (GMMI…PIEY), 365–385 (MFMF…GAAF), and 419–439 (IVNF…IANF). The PTS EIIB type-1 domain maps to 473–555 (GSQAVNIINL…QDILDSGEII (83 aa)). The active-site Phosphocysteine intermediate; for EIIB activity is the Cys495. The region spanning 596-700 (DPVFAQKMMG…ETSTVVVFTN (105 aa)) is the PTS EIIA type-1 domain. Catalysis depends on His648, which acts as the Tele-phosphohistidine intermediate; for EIIA activity.

The protein localises to the cell membrane. It carries out the reaction N(pros)-phospho-L-histidyl-[protein] + D-glucose(out) = D-glucose 6-phosphate(in) + L-histidyl-[protein]. Its function is as follows. The phosphoenolpyruvate-dependent sugar phosphotransferase system (sugar PTS), a major carbohydrate active transport system, catalyzes the phosphorylation of incoming sugar substrates concomitantly with their translocation across the cell membrane. This system is involved in glucose transport. The protein is PTS system glucose-specific EIICBA component (exp5) of Streptococcus pneumoniae serotype 4 (strain ATCC BAA-334 / TIGR4).